A 116-amino-acid chain; its full sequence is Large ribosomal subunit protein bL19 (116 aa).

It belongs to the bacterial ribosomal protein bL19 family.

This protein is located at the 30S-50S ribosomal subunit interface and may play a role in the structure and function of the aminoacyl-tRNA binding site. This is Large ribosomal subunit protein bL19 from Lactobacillus gasseri (strain ATCC 33323 / DSM 20243 / BCRC 14619 / CIP 102991 / JCM 1131 / KCTC 3163 / NCIMB 11718 / NCTC 13722 / AM63).